Here is a 365-residue protein sequence, read N- to C-terminus: Protein RecA (365 aa).

73-80 serves as a coordination point for ATP; that stretch reads GPESSGKT.

Belongs to the RecA family.

The protein localises to the cytoplasm. Functionally, can catalyze the hydrolysis of ATP in the presence of single-stranded DNA, the ATP-dependent uptake of single-stranded DNA by duplex DNA, and the ATP-dependent hybridization of homologous single-stranded DNAs. It interacts with LexA causing its activation and leading to its autocatalytic cleavage. In Prochlorococcus marinus (strain MIT 9215), this protein is Protein RecA.